The following is a 440-amino-acid chain: MDQLAHHYRAHIAELNRRVAEILSREALSGLVIHSGQPHRMFLDDINYPFKANPHFKAWLPVLDNPNCWLVVNGRDKPQLIFYRPVDFWHKVSDVPDMFWTEYFDIKLLTKADKVAEFLPTDIANWAYLGEHLDVAEVLGFTSRNPDAVMSYLHYHRTTKTEYELECMRRANQIAVQGHLAAKNAFYNGASEFEIQQHYLSAVGQSENEVPYGNIIALNQNAAILHYTALEHQSPAKRLSFLIDAGASYFGYASDITRTYAFEKNRFDELITAMNKAQLELIDMMRPGVRYPDLHLATHAKVAQMLLDFDLATGDVQGLVDQGITSAFFPHGLGHMLGLQVHDVGGFSHDERGTHIAAPEAHPFLRCTRILAPNQVLTMEPGLYIIDTLLNELKQDSRGQQINWQTVDELRPFGGIRIEDNVIVHQDRNENMTRELGLTD.

Mn(2+)-binding residues include D244, D255, H335, E380, and E419.

Belongs to the peptidase M24B family. Bacterial-type prolidase subfamily. The cofactor is Mn(2+).

The enzyme catalyses Xaa-L-Pro dipeptide + H2O = an L-alpha-amino acid + L-proline. Functionally, splits dipeptides with a prolyl residue in the C-terminal position. This Shewanella baltica (strain OS223) protein is Xaa-Pro dipeptidase.